We begin with the raw amino-acid sequence, 148 residues long: Arginine repressor (148 aa).

The protein belongs to the ArgR family.

The protein localises to the cytoplasm. It functions in the pathway amino-acid biosynthesis; L-arginine biosynthesis [regulation]. In terms of biological role, regulates arginine biosynthesis genes. The chain is Arginine repressor from Acidobacterium capsulatum (strain ATCC 51196 / DSM 11244 / BCRC 80197 / JCM 7670 / NBRC 15755 / NCIMB 13165 / 161).